A 706-amino-acid polypeptide reads, in one-letter code: Choline transporter-like protein 2 (706 aa).

Residues 1-33 lie on the Cytoplasmic side of the membrane; it reads MGKDSQNYYGKHGTPQKYDPTFKGPIYNRGCTD. Residue threonine 14 is modified to Phosphothreonine. A helical membrane pass occupies residues 34–54; it reads VICCVLLFLAIVGYVAVGIIA. At 55-232 the chain is on the extracellular side; sequence WTHGDPRKVI…QIFEDYTVSW (178 aa). Residues asparagine 187 and asparagine 200 are each glycosylated (N-linked (GlcNAc...) asparagine). Residues 233 to 253 traverse the membrane as a helical segment; sequence YWIIIGLVIAMVLSLLFIVLL. Residues 254–256 lie on the Cytoplasmic side of the membrane; that stretch reads RFL. The chain crosses the membrane as a helical span at residues 257–277; sequence AGIMVWVMIVMVILVLGYGIF. The Extracellular portion of the chain corresponds to 278–315; the sequence is HCYMEYSRLRGEAGSDVSLVDLGFQTDLRVYLHLRQTW. A helical transmembrane segment spans residues 316 to 336; that stretch reads MAFMIILSILEVVIILLLIFL. The Cytoplasmic portion of the chain corresponds to 337 to 364; sequence RKRILIAIALIKEASRAVGHVMCSLLYP. Residues 365–385 form a helical membrane-spanning segment; it reads LVTFFLLCLCIAYWASTSVFL. The Extracellular segment spans residues 386–454; that stretch reads STSNTAVYKV…LQIFNAFMFF (69 aa). A glycan (N-linked (GlcNAc...) asparagine) is linked at asparagine 417. A helical membrane pass occupies residues 455–477; it reads WLANFVLALGQVTLAGAFASYYW. Residues 478–504 lie on the Cytoplasmic side of the membrane; the sequence is AMRKPDDMPAFPLFSAFGRALRYHTGS. A helical membrane pass occupies residues 505–525; sequence LAFGSLILAIVQIIRVMLEYL. Residues 526–563 lie on the Extracellular side of the membrane; that stretch reads DQRLKAAQNKFAKFLMVCLKCCFWCLEKFIKFLNRNAY. Residues 564-584 traverse the membrane as a helical segment; that stretch reads IMIAIYGTNFCTSARNAFFLL. Over 585–599 the chain is Cytoplasmic; sequence MRNIIRVAVLDKVTD. Residues 600-620 traverse the membrane as a helical segment; that stretch reads FLFLLGKLLIVGSVGILAFFF. Residues 621-638 are Extracellular-facing; it reads FTHRIRIVQDTAPPLNYY. Residues 639-659 traverse the membrane as a helical segment; sequence WVPILTVIIGSYLIAHGFFSV. At 660 to 706 the chain is on the cytoplasmic side; the sequence is YGMCVDTLFLCFLEDLERNDGSAERPYFMSSTLKKLLNKTNKKVAES.

Belongs to the CTL (choline transporter-like) family. As to quaternary structure, interacts with COCH. Glycosylated, glycosylation differs from tissue to tissue. The molecular mass of the mature glycosylated protein is highest in kidney, followed by lung, colon and spleen, then brain and tongue. In terms of tissue distribution, expressed at high levels in lung, colon, inner ear and spleen (at protein level). Progressively lower levels in brain, tongue, liver and kidney (at protein level). In the kidney, prominent expression in glomeruli in the lining of Bowman's capsule and on the mesangial cells adjacent to the vessels within the glomerulus (at protein level). Strongly expressed on the membranes of splenocytes and in lung parenchyme (at protein level). Expressed at higher levels than isoform 2 in colon, heart, kidney, lung, cochlea, tongue and muscle, as well as in the inner ear. As to expression, predominantly expressed in brain, liver and spleen.

The protein resides in the cell membrane. The protein localises to the mitochondrion outer membrane. It carries out the reaction choline(out) + n H(+)(in) = choline(in) + n H(+)(out). The enzyme catalyses ethanolamine(out) + n H(+)(in) = ethanolamine(in) + n H(+)(out). In terms of biological role, choline/H+ antiporter, mainly in mitochodria. Also acts as a low-affinity ethanolamine/H+ antiporter, regulating the supply of extracellular ethanolamine (Etn) for the CDP-Etn pathway, redistribute intracellular Etn and balance the CDP-Cho and CDP-Etn arms of the Kennedy pathway. The polypeptide is Choline transporter-like protein 2 (Slc44a2) (Mus musculus (Mouse)).